The following is a 166-amino-acid chain: NADH-quinone oxidoreductase subunit I (166 aa).

4Fe-4S ferredoxin-type domains lie at 57 to 87 (LRRY…IESE) and 97 to 126 (TRYD…VTPI). Residues Cys67, Cys70, Cys73, Cys77, Cys106, Cys109, Cys112, and Cys116 each contribute to the [4Fe-4S] cluster site.

It belongs to the complex I 23 kDa subunit family. In terms of assembly, NDH-1 is composed of 14 different subunits. Subunits NuoA, H, J, K, L, M, N constitute the membrane sector of the complex. [4Fe-4S] cluster is required as a cofactor.

It is found in the cell inner membrane. It carries out the reaction a quinone + NADH + 5 H(+)(in) = a quinol + NAD(+) + 4 H(+)(out). NDH-1 shuttles electrons from NADH, via FMN and iron-sulfur (Fe-S) centers, to quinones in the respiratory chain. The immediate electron acceptor for the enzyme in this species is believed to be ubiquinone. Couples the redox reaction to proton translocation (for every two electrons transferred, four hydrogen ions are translocated across the cytoplasmic membrane), and thus conserves the redox energy in a proton gradient. This Legionella pneumophila (strain Lens) protein is NADH-quinone oxidoreductase subunit I.